Reading from the N-terminus, the 230-residue chain is Ropporin-1-like protein (230 aa).

The RIIa domain maps to 17 to 46; it reads PELPDILKQFTKAAIRTQPADVLRWSAGYF.

Belongs to the ropporin family. Component of the axonemal radial spoke complex 1 (RS1), at least composed of spoke head proteins RSPH1, RSPH3, RSPH9 and the cilia-specific component RSPH4A or sperm-specific component RSPH6A, spoke stalk proteins RSPH14, DNAJB13, DYDC1, ROPN1L and NME5, and the anchor protein IQUB. Interacts with FSCB; the interaction increases upon spermatozoa capacitation conditions. May interact with AKAP3. Interacts with CFAP61. In terms of processing, sumoylated, sumoylation decreases upon spermatozoa capacitation conditions.

It is found in the cell projection. The protein localises to the cilium. It localises to the flagellum. Its function is as follows. Functions as part of axonemal radial spoke complexes that play an important part in the motility of sperm and cilia. Important for male fertility. With ROPN1, involved in fibrous sheath integrity and sperm motility, plays a role in PKA-dependent signaling processes required for spermatozoa capacitation. This Homo sapiens (Human) protein is Ropporin-1-like protein (ROPN1L).